A 901-amino-acid polypeptide reads, in one-letter code: Core protein VP3 (901 aa).

The protein belongs to the orbivirus VP3 family.

It is found in the virion. Functionally, the VP3 protein is one of the five proteins (with VP1, VP4, VP6 and VP7) which form the inner capsid of the virus. The protein is Core protein VP3 (Segment-3) of Antilocapra americana (Pronghorn).